Reading from the N-terminus, the 179-residue chain is Large ribosomal subunit protein uL5 (179 aa).

Belongs to the universal ribosomal protein uL5 family. Part of the 50S ribosomal subunit; part of the 5S rRNA/L5/L18/L25 subcomplex. Contacts the 5S rRNA and the P site tRNA. Forms a bridge to the 30S subunit in the 70S ribosome.

Functionally, this is one of the proteins that bind and probably mediate the attachment of the 5S RNA into the large ribosomal subunit, where it forms part of the central protuberance. In the 70S ribosome it contacts protein S13 of the 30S subunit (bridge B1b), connecting the 2 subunits; this bridge is implicated in subunit movement. Contacts the P site tRNA; the 5S rRNA and some of its associated proteins might help stabilize positioning of ribosome-bound tRNAs. This is Large ribosomal subunit protein uL5 from Trichlorobacter lovleyi (strain ATCC BAA-1151 / DSM 17278 / SZ) (Geobacter lovleyi).